The following is a 259-amino-acid chain: Thiazole synthase (259 aa).

Lysine 102 acts as the Schiff-base intermediate with DXP in catalysis. 1-deoxy-D-xylulose 5-phosphate is bound by residues glycine 163, 189–190, and 211–212; these read AG and NT.

Belongs to the ThiG family. In terms of assembly, homotetramer. Forms heterodimers with either ThiH or ThiS.

The protein resides in the cytoplasm. The enzyme catalyses [ThiS sulfur-carrier protein]-C-terminal-Gly-aminoethanethioate + 2-iminoacetate + 1-deoxy-D-xylulose 5-phosphate = [ThiS sulfur-carrier protein]-C-terminal Gly-Gly + 2-[(2R,5Z)-2-carboxy-4-methylthiazol-5(2H)-ylidene]ethyl phosphate + 2 H2O + H(+). It participates in cofactor biosynthesis; thiamine diphosphate biosynthesis. In terms of biological role, catalyzes the rearrangement of 1-deoxy-D-xylulose 5-phosphate (DXP) to produce the thiazole phosphate moiety of thiamine. Sulfur is provided by the thiocarboxylate moiety of the carrier protein ThiS. In vitro, sulfur can be provided by H(2)S. This Novosphingobium aromaticivorans (strain ATCC 700278 / DSM 12444 / CCUG 56034 / CIP 105152 / NBRC 16084 / F199) protein is Thiazole synthase.